The chain runs to 309 residues: NAD kinase (309 aa).

Asp89 (proton acceptor) is an active-site residue. Residues Asp89–Gly90, Asn163–Glu164, His174, Arg191, Asp193, and Thr204–Ser209 each bind NAD(+).

Belongs to the NAD kinase family. It depends on a divalent metal cation as a cofactor.

Its subcellular location is the cytoplasm. It catalyses the reaction NAD(+) + ATP = ADP + NADP(+) + H(+). Involved in the regulation of the intracellular balance of NAD and NADP, and is a key enzyme in the biosynthesis of NADP. Catalyzes specifically the phosphorylation on 2'-hydroxyl of the adenosine moiety of NAD to yield NADP. The chain is NAD kinase from Shewanella sp. (strain MR-4).